Reading from the N-terminus, the 274-residue chain is Large ribosomal subunit protein uL2cz/uL2cy (274 aa).

2 disordered regions span residues 1 to 23 and 224 to 274; these read MAIH…SKVK and NPVD…RRSK.

The protein belongs to the universal ribosomal protein uL2 family. In terms of assembly, part of the 50S ribosomal subunit.

Its subcellular location is the plastid. It is found in the chloroplast. The polypeptide is Large ribosomal subunit protein uL2cz/uL2cy (rpl2-A) (Lactuca sativa (Garden lettuce)).